Reading from the N-terminus, the 629-residue chain is Polyadenylate-binding protein 2 (629 aa).

The span at 1–12 shows a compositional bias: polar residues; that stretch reads MAQVQLQGQTPN. The disordered stretch occupies residues 1 to 25; it reads MAQVQLQGQTPNGSTAAVTSAPATS. Over residues 13 to 25 the composition is skewed to low complexity; sequence GSTAAVTSAPATS. RRM domains lie at 36 to 114, 124 to 201, 215 to 292, and 318 to 395; these read TSLY…YSHR, GNIF…PFLR, TNVY…RAQK, and SNLY…IAQR. A disordered region spans residues 480 to 507; sequence PQQQRPGGGRRPGGIQHSQQQNPMMQQQ. Residues 492–507 are compositionally biased toward low complexity; sequence GGIQHSQQQNPMMQQQ. Positions 539–616 constitute a PABC domain; that stretch reads TIGALASNLS…AMDVLRSVAA (78 aa).

This sequence belongs to the polyadenylate-binding protein type-1 family. As to quaternary structure, interacts with eIF-iso4G. Interacts with ERD15/CID1 and CID7. Interacts with Turnip mosaic virus (TuMV) VPg-Pro and RNA-dependent RNA polymerase (RdRp). Expressed in all organs (at the protein level) but under distinct spatial and temporal regulation within each organ.

The protein localises to the cytoplasm. It localises to the nucleus. Its function is as follows. Binds the poly(A) tail of mRNA. Appears to be an important mediator of the multiple roles of the poly(A) tail in mRNA biogenesis, stability and translation. In the cytoplasm, affects both translation and mRNA decay. Stimulates translation by interaction with translation initiation factor eIF4G, a subunit of the cap-binding complex eIF4F, bringing the 5'- and 3'-ends of the mRNA in proximity. The formation of this circular mRNP structure appears to be critical for the synergistic effects of the cap and the poly(A) tail in facilitating translation initiation, recycling of ribosomes, and mRNA stability. During infection with potyvirus TuMV, acts as a potential integral component of the viral replicase complex that could play an important role in the regulation of potyviral RNA-dependent RNA polymerase (RdRp). Binds to uridylated mRNAs and determines the size of uridine extensions. Limits uridine extension by URT1, likely by binding to the oligo(A) tail and preventing URT1 access. The chain is Polyadenylate-binding protein 2 (PAB2) from Arabidopsis thaliana (Mouse-ear cress).